We begin with the raw amino-acid sequence, 334 residues long: Sucrose operon repressor (334 aa).

In terms of domain architecture, HTH lacI-type spans 6-63; that stretch reads VTIKDIAELAGVSKATASLVLNGRGKELRVAQETRERVLAIAREQHYQPSIHARSLRD. A DNA-binding region (H-T-H motif) is located at residues 8–27; that stretch reads IKDIAELAGVSKATASLVLN.

In terms of biological role, repressor for the scr operon. Binds D-fructose as an inducer. This Klebsiella pneumoniae protein is Sucrose operon repressor (scrR).